The primary structure comprises 428 residues: GTPase Obg (428 aa).

In terms of domain architecture, Obg spans 1–158 (MFVDQVKIYV…RYIVLELKVL (158 aa)). Residues 118–143 (KGGRGGRGNTRFATPANPAPQLSENG) form a disordered region. The OBG-type G domain occupies 159–329 (ADVGLVGFPS…LLFEIADRLE (171 aa)). Residues 165-172 (GFPSVGKS), 190-194 (FTTLN), 212-215 (DLPG), 282-285 (NKMD), and 310-312 (SAV) each bind GTP. Positions 172 and 192 each coordinate Mg(2+). The 79-residue stretch at 350 to 428 (KLEDEEAPFE…LLEFEFEFID (79 aa)) folds into the OCT domain.

It belongs to the TRAFAC class OBG-HflX-like GTPase superfamily. OBG GTPase family. In terms of assembly, monomer. Mg(2+) serves as cofactor.

The protein resides in the cytoplasm. In terms of biological role, an essential GTPase which binds GTP, GDP and possibly (p)ppGpp with moderate affinity, with high nucleotide exchange rates and a fairly low GTP hydrolysis rate. Plays a role in control of the cell cycle, stress response, ribosome biogenesis and in those bacteria that undergo differentiation, in morphogenesis control. The protein is GTPase Obg of Bacillus licheniformis (strain ATCC 14580 / DSM 13 / JCM 2505 / CCUG 7422 / NBRC 12200 / NCIMB 9375 / NCTC 10341 / NRRL NRS-1264 / Gibson 46).